A 108-amino-acid chain; its full sequence is Large ribosomal subunit protein uL24 (108 aa).

The protein belongs to the universal ribosomal protein uL24 family. Part of the 50S ribosomal subunit.

Functionally, one of two assembly initiator proteins, it binds directly to the 5'-end of the 23S rRNA, where it nucleates assembly of the 50S subunit. One of the proteins that surrounds the polypeptide exit tunnel on the outside of the subunit. This Mycoplasmopsis pulmonis (strain UAB CTIP) (Mycoplasma pulmonis) protein is Large ribosomal subunit protein uL24.